The following is a 330-amino-acid chain: uncharacterized protein (330 aa).

This is an uncharacterized protein from Schizosaccharomyces pombe (strain 972 / ATCC 24843) (Fission yeast).